The chain runs to 470 residues: MEFSSHHIRLLQQLDEQRQKDLFCDCHIIVEGQMFKAHRNVLFASSGYFKMLLSQSCRDMGEPITATFDVFSADTFTAILDFVYSGKLPLSGQNVIEVMSAASYLQMTDVIGVCKMFIKSSLDINEKDRDGFFSLSDKDAGSNGSGLYAAGWRTESSPTHTHDTAEHGSFIAGYNYPPPITSRLQRPFSKHPRKPELVRKHRRRLLPEPLTPAPLSHIPLGDLVGGSAECMLHDEETVESVSQEEERTQTQESIISIKDEDEDAASHSWPESPQQESLDQGPALHITKAEELYKAMPTMLGGVSGWGEDELSSGRFKCPFCTHTVKRKADLKRHLRCHTGERPYPCEACGKRFTRLEHLRNHFQTIHEAGKLICRRCKLPVTKVTGRVIQDGTRRYRLCHACLAEAGLDNVNFDYGEDQPLVLPPENEREHCWNFKEEGRKENGSERAESDLAIQEVVDSEDDELKEKQD.

The BTB domain maps to 24 to 92 (CDCHIIVEGQ…VYSGKLPLSG (69 aa)). A disordered region spans residues 260–280 (EDEDAASHSWPESPQQESLDQ). The span at 269–278 (WPESPQQESL) shows a compositional bias: polar residues. 2 C2H2-type zinc fingers span residues 316-338 (FKCPFCTHTVKRKADLKRHLRCH) and 344-367 (YPCEACGKRFTRLEHLRNHFQTIH). Positions 439-450 (GRKENGSERAES) are enriched in basic and acidic residues. A disordered region spans residues 439 to 470 (GRKENGSERAESDLAIQEVVDSEDDELKEKQD).

It localises to the nucleus. May be involved in transcriptional regulation. This is Zinc finger and BTB domain-containing protein 8A.1-A (zbtb8a.1-a) from Xenopus laevis (African clawed frog).